The sequence spans 241 residues: Tetrahydromethanopterin S-methyltransferase subunit A (241 aa).

Over 1–220 the chain is Cytoplasmic; it reads MANKREPAPG…AKWQAGYYNG (220 aa). A 5-hydroxybenzimidazolylcob(I)amide-binding site is contributed by His85. The helical transmembrane segment at 221-241 threads the bilayer; that stretch reads KIQGIATGLFLMLLIMGILMF.

The protein belongs to the MtrA family. The complex is composed of 8 subunits; MtrA, MtrB, MtrC, MtrD, MtrE, MtrF, MtrG and MtrH. The cofactor is 5-hydroxybenzimidazolylcob(I)amide.

The protein resides in the cell membrane. It catalyses the reaction 5-methyl-5,6,7,8-tetrahydromethanopterin + coenzyme M + 2 Na(+)(in) = 5,6,7,8-tetrahydromethanopterin + methyl-coenzyme M + 2 Na(+)(out). It participates in one-carbon metabolism; methanogenesis from CO(2); methyl-coenzyme M from 5,10-methylene-5,6,7,8-tetrahydromethanopterin: step 2/2. Functionally, part of a complex that catalyzes the formation of methyl-coenzyme M and tetrahydromethanopterin from coenzyme M and methyl-tetrahydromethanopterin. This is an energy-conserving, sodium-ion translocating step. This chain is Tetrahydromethanopterin S-methyltransferase subunit A, found in Methanocaldococcus jannaschii (strain ATCC 43067 / DSM 2661 / JAL-1 / JCM 10045 / NBRC 100440) (Methanococcus jannaschii).